Consider the following 423-residue polypeptide: AP-1 complex subunit mu-2 (423 aa).

The MHD domain occupies 168–421; the sequence is KNEVFIDVIE…ITQSGDYQLR (254 aa).

It belongs to the adaptor complexes medium subunit family. As to quaternary structure, adaptor protein complex 1 (AP-1) is a heterotetramer composed of two large adaptins (gamma-type subunit AP1G1 and beta-type subunit AP1B1), a medium adaptin (mu-type subunit AP1M1 or AP1M2) and a small adaptin (sigma-type subunit AP1S1 or AP1S2 or AP1S3). Interacts with P2X4. Phosphorylation of membrane-bound AP1M1/AP1M2 increases its affinity for sorting signals.

The protein localises to the golgi apparatus. Its subcellular location is the cytoplasmic vesicle. The protein resides in the clathrin-coated vesicle membrane. Subunit of clathrin-associated adaptor protein complex 1 that plays a role in protein sorting in the trans-Golgi network (TGN) and endosomes. The AP complexes mediate the recruitment of clathrin to membranes and the recognition of sorting signals within the cytosolic tails of transmembrane cargo molecules. This is AP-1 complex subunit mu-2 (AP1M2) from Homo sapiens (Human).